We begin with the raw amino-acid sequence, 405 residues long: uncharacterized protein (405 aa).

The signal sequence occupies residues 1-34 (MNKFLKYFLILLALVLIVVPIVFATLLFKTSQDA). Residues 348–359 (EQNDTTDKDKTS) are compositionally biased toward basic and acidic residues. Positions 348-405 (EQNDTTDKDKTSNENSDSTNNSDSSNQQQPATDQNSNQNQGGTQQAPQASNNQNGVVN) are disordered. 2 stretches are compositionally biased toward low complexity: residues 360-373 (NENS…DSSN) and 381-392 (QNSNQNQGGTQQ). Residues 393–405 (APQASNNQNGVVN) show a composition bias toward polar residues.

The protein belongs to the LytR/CpsA/Psr (LCP) family.

This is an uncharacterized protein from Staphylococcus aureus (strain NCTC 8325 / PS 47).